Reading from the N-terminus, the 432-residue chain is Amino-acid acetyltransferase (432 aa).

In terms of domain architecture, N-acetyltransferase spans 286-425 (ESLREATIED…ASLYNYQRNS (140 aa)).

It belongs to the acetyltransferase family. ArgA subfamily.

It localises to the cytoplasm. It catalyses the reaction L-glutamate + acetyl-CoA = N-acetyl-L-glutamate + CoA + H(+). Its pathway is amino-acid biosynthesis; L-arginine biosynthesis; N(2)-acetyl-L-ornithine from L-glutamate: step 1/4. This is Amino-acid acetyltransferase from Ectopseudomonas mendocina (strain ymp) (Pseudomonas mendocina).